Here is a 161-residue protein sequence, read N- to C-terminus: Phosphopantetheine adenylyltransferase (161 aa).

T10 lines the substrate pocket. Residues 10–11 (TF) and H18 contribute to the ATP site. Residues K42, M74, and R88 each coordinate substrate. ATP-binding positions include 89-91 (GLR), E99, and 124-130 (WSFISSS).

Belongs to the bacterial CoaD family. In terms of assembly, homohexamer. Mg(2+) serves as cofactor.

It is found in the cytoplasm. It catalyses the reaction (R)-4'-phosphopantetheine + ATP + H(+) = 3'-dephospho-CoA + diphosphate. The protein operates within cofactor biosynthesis; coenzyme A biosynthesis; CoA from (R)-pantothenate: step 4/5. Functionally, reversibly transfers an adenylyl group from ATP to 4'-phosphopantetheine, yielding dephospho-CoA (dPCoA) and pyrophosphate. The polypeptide is Phosphopantetheine adenylyltransferase (Serratia marcescens).